The sequence spans 183 residues: Ribosome-binding factor A (183 aa).

Residues 132–183 form a disordered region; it reads PAGEADPYRDNGSVAQSPAPGGLGIRTSDGPEAVEAPLTCGGDTGDDDRPKE.

Belongs to the RbfA family. As to quaternary structure, monomer. Binds 30S ribosomal subunits, but not 50S ribosomal subunits or 70S ribosomes.

It is found in the cytoplasm. In terms of biological role, one of several proteins that assist in the late maturation steps of the functional core of the 30S ribosomal subunit. Associates with free 30S ribosomal subunits (but not with 30S subunits that are part of 70S ribosomes or polysomes). Required for efficient processing of 16S rRNA. May interact with the 5'-terminal helix region of 16S rRNA. This Mycobacterium tuberculosis (strain ATCC 25177 / H37Ra) protein is Ribosome-binding factor A.